A 179-amino-acid chain; its full sequence is Nicotinamide-nucleotide adenylyltransferase (179 aa).

The protein belongs to the archaeal NMN adenylyltransferase family.

The protein localises to the cytoplasm. The catalysed reaction is beta-nicotinamide D-ribonucleotide + ATP + H(+) = diphosphate + NAD(+). The protein operates within cofactor biosynthesis; NAD(+) biosynthesis; NAD(+) from nicotinamide D-ribonucleotide: step 1/1. The chain is Nicotinamide-nucleotide adenylyltransferase from Thermoplasma acidophilum (strain ATCC 25905 / DSM 1728 / JCM 9062 / NBRC 15155 / AMRC-C165).